We begin with the raw amino-acid sequence, 550 residues long: Hydroxylamine reductase (550 aa).

4 residues coordinate [2Fe-2S] cluster: Cys3, Cys6, Cys18, and Cys25. His249, Glu273, Cys317, Cys405, Cys433, Cys458, Glu492, and Lys494 together coordinate hybrid [4Fe-2O-2S] cluster. A Cysteine persulfide modification is found at Cys405.

This sequence belongs to the HCP family. [2Fe-2S] cluster is required as a cofactor. Requires hybrid [4Fe-2O-2S] cluster as cofactor.

The protein resides in the cytoplasm. It catalyses the reaction A + NH4(+) + H2O = hydroxylamine + AH2 + H(+). Catalyzes the reduction of hydroxylamine to form NH(3) and H(2)O. The protein is Hydroxylamine reductase of Salmonella agona (strain SL483).